A 369-amino-acid polypeptide reads, in one-letter code: Peptide chain release factor 2 (369 aa).

Gln-249 is subject to N5-methylglutamine.

Belongs to the prokaryotic/mitochondrial release factor family. Post-translationally, methylated by PrmC. Methylation increases the termination efficiency of RF2.

The protein localises to the cytoplasm. In terms of biological role, peptide chain release factor 2 directs the termination of translation in response to the peptide chain termination codons UGA and UAA. The protein is Peptide chain release factor 2 of Thermosipho melanesiensis (strain DSM 12029 / CIP 104789 / BI429).